A 180-amino-acid polypeptide reads, in one-letter code: Magnetosome protein MamS (180 aa).

Over 1–21 the chain is Cytoplasmic; that stretch reads MDFRPDQVVARIRGAVEGALT. A helical membrane pass occupies residues 22 to 42; the sequence is AQSVLGIGGALVLILVVIALL. The Lumenal segment spans residues 43 to 180; sequence PDRFTRGEGK…EGLALWMTVQ (138 aa).

The protein belongs to the magnetosome MamS family.

It is found in the magnetosome membrane. Its function is as follows. May play a role in magnetite crystal growth and size. The chain is Magnetosome protein MamS from Magnetospirillum gryphiswaldense (strain DSM 6361 / JCM 21280 / NBRC 15271 / MSR-1).